We begin with the raw amino-acid sequence, 118 residues long: Large ribosomal subunit protein bL19 (118 aa).

Belongs to the bacterial ribosomal protein bL19 family.

This protein is located at the 30S-50S ribosomal subunit interface and may play a role in the structure and function of the aminoacyl-tRNA binding site. The sequence is that of Large ribosomal subunit protein bL19 from Campylobacter curvus (strain 525.92).